The chain runs to 2382 residues: Serine/threonine-protein kinase WNK1 (2382 aa).

Disordered stretches follow at residues 1 to 81 (MSGG…RFFR) and 95 to 203 (LPGL…QQDD). Serine 15 and serine 19 each carry phosphoserine. Residues 50–66 (RTEEYRRRRHTMDKDSR) are compositionally biased toward basic and acidic residues. At threonine 60 the chain carries Phosphothreonine. Low complexity-rich tracts occupy residues 95–108 (LPGL…PSIP) and 125–153 (VTAT…GPAP). A phosphoserine mark is found at serine 167 and serine 174. Positions 221-479 (LKFDIEIGRG…IKDLLNHAFF (259 aa)) constitute a Protein kinase domain. An ATP-binding site is contributed by serine 231. Positions 283 and 299 each coordinate chloride. Residues 301–304 (TELM) and lysine 351 contribute to the ATP site. The active-site Proton acceptor is the aspartate 368. Leucine 369 and leucine 371 together coordinate chloride. Residues serine 378 and serine 382 each carry the phosphoserine; by autocatalysis modification. Residues 488–555 (ELAEEDDGEK…VCEGDHKTMA (68 aa)) form an autoinhibitory domain region. Over residues 573 to 588 (QLVREEQEKKKQEESS) the composition is skewed to basic and acidic residues. Disordered regions lie at residues 573 to 779 (QLVR…QPQA), 1018 to 1041 (QPGG…STQG), and 1053 to 1119 (VAQT…SRPK). A compositionally biased stretch (polar residues) spans 598-614 (ASQTGIKQLPSASTGIP). The span at 615–625 (TASTTSASVST) shows a compositional bias: low complexity. The segment at 628-638 (EPEEPEADQHQ) is interaction with KLHL3. The span at 637–689 (HQQLQYQQPSISVLSDGTVDSGQGSSVFTESRVSSQQTVSYGSQHEQAHSTGT) shows a compositional bias: polar residues. Residues 709–779 (PPSSVAQGQS…TAQPVSQPQA (71 aa)) are compositionally biased toward low complexity. Positions 1025–1041 (QAPTTSSQQAVLESTQG) are enriched in polar residues. The segment covering 1053–1077 (VAQTQATQPTTLASSVDSAHSDVAS) has biased composition (low complexity). The span at 1080–1090 (SDGNENVPSSS) shows a compositional bias: polar residues. Positions 1098-1119 (TKRHYRKSVRSRSRHEKTSRPK) are enriched in basic residues. Positions 1257–1260 (RFIV) match the RFXV motif 1 motif. Serine 1261 is modified (phosphoserine). Composition is skewed to low complexity over residues 1457-1467 (SASAGGSTATP) and 1733-1745 (QVST…TSGV). Disordered stretches follow at residues 1457-1476 (SASA…AVVS) and 1733-1790 (QVST…TQSQ). Residue threonine 1848 is modified to Phosphothreonine. Residues 1859–1862 (RFQV) carry the RFXV motif 2 motif. The tract at residues 1866-1948 (ADGAQKEGKN…QPTKVGRFQV (83 aa)) is disordered. Positions 1869 to 1884 (AQKEGKNKSEDAKSVH) are enriched in basic and acidic residues. The segment covering 1887–1905 (SSTSESSVLSSSSPESTLV) has biased composition (low complexity). The span at 1927–1940 (KTTASEAKSDTGQP) shows a compositional bias: polar residues. Short sequence motifs (RFXV motif) lie at residues 1945–1948 (RFQV) and 1957–1960 (RFSV). Serine 1978, serine 2002, serine 2011, serine 2012, serine 2027, serine 2029, and serine 2032 each carry phosphoserine. The segment covering 1994-2003 (PKKEKPELSE) has biased composition (basic and acidic residues). 2 disordered regions span residues 1994–2069 (PKKE…DIED) and 2101–2196 (LYTK…NLYS). Positions 2035-2062 (QLSSKSLPSQNLSQSLSNSFNSSYMSSD) are enriched in low complexity. Serine 2121 is subject to Phosphoserine. Residues 2122–2134 (GRRRRPTKSKGSK) are compositionally biased toward basic residues. Residues 2135–2145 (SSRSSSLGNKS) show a composition bias toward low complexity. Composition is skewed to polar residues over residues 2146–2167 (PQLS…QQTL) and 2175–2196 (ESGQ…NLYS). The interval 2241–2261 (SRKGTFTDDLHKLVDNWARDA) is amphipathic alpha-helix. Phosphoserine is present on residues serine 2270 and serine 2286. The segment at 2332–2352 (PFGAQWSGTGGPAPQPLGQFQ) is disordered. Phosphoserine occurs at positions 2370 and 2372.

Belongs to the protein kinase superfamily. Ser/Thr protein kinase family. WNK subfamily. In terms of assembly, interacts with WNK3. Interacts with WNK4; inhibiting the activity of WNK4. Interacts with SGK1; promoting its activation. Associates with the mTORC2 complex. Interacts with UVRAG. Interacts (via amphipathic alpha-helix region) with EMC2; promoting the ER membrane protein complex assembly. As to quaternary structure, interacts with isoform 1; inhibiting isoform 1 activity. Mg(2+) is required as a cofactor. Autophosphorylated at Ser-378 and Ser-382, promoting its activity. Autophosphorylation at Ser-382 is inhibited by intracellular calcium. Phosphorylation at Thr-60 increases ability to activate SGK1. In terms of processing, ubiquitinated by the BCR(KLHL3) complex, leading to its degradation. Also ubiquitinated by the BCR(KLHL2) complex. Post-translationally, may be O-glycosylated. Widely expressed, with highest levels observed in the testis, heart, kidney and skeletal muscle. In terms of tissue distribution, strong expression in dorsal root ganglia and spinal cord. As to expression, this isoform is kidney-specific and specifically expressed in the distal convoluted tubule (DCT) and connecting tubule (CNT) of the nephron.

The protein resides in the cytoplasm. It is found in the nucleus. The protein localises to the cytoskeleton. It localises to the spindle. It catalyses the reaction L-seryl-[protein] + ATP = O-phospho-L-seryl-[protein] + ADP + H(+). The catalysed reaction is L-threonyl-[protein] + ATP = O-phospho-L-threonyl-[protein] + ADP + H(+). With respect to regulation, activated in response to hyperosmotic stress: cell shrinkage promotes formation of a membraneless compartment that concentrates WNK1 with its substrates, OXSR1/OSR1 and STK39/SPAK. Activation requires autophosphorylation of Ser-382 and, to a lower extent, Ser-378. Autophosphorylation and subsequent activation is inhibited by increases in intracellular ionic strength: Cl(-) potently inhibits WNK1 kinase activity via direct binding. Also inhibited by K(+) ions. Inhibited by small compounds staurosporine, tyrphostin 47, as well as Src tyrosine kinase inhibitors PP1 and PP2. Functionally, serine/threonine-protein kinase component of the WNK1-SPAK/OSR1 kinase cascade, which acts as a key regulator of blood pressure and regulatory volume increase by promoting ion influx. WNK1 mediates regulatory volume increase in response to hyperosmotic stress by acting as a molecular crowding sensor, which senses cell shrinkage and mediates formation of a membraneless compartment by undergoing liquid-liquid phase separation. The membraneless compartment concentrates WNK1 with its substrates, OXSR1/OSR1 and STK39/SPAK, promoting WNK1-dependent phosphorylation and activation of downstream kinases OXSR1/OSR1 and STK39/SPAK. Following activation, OXSR1/OSR1 and STK39/SPAK catalyze phosphorylation of ion cotransporters SLC12A1/NKCC2, SLC12A2/NKCC1, SLC12A5/KCC2 and SLC12A6/KCC3, regulating their activity. Phosphorylation of Na-K-Cl cotransporters SLC12A2/NKCC1 and SLC12A2/NKCC1 promote their activation and ion influx; simultaneously, phosphorylation of K-Cl cotransporters SLC12A5/KCC2 and SLC12A6/KCC3 inhibit their activity, blocking ion efflux. Also acts as a regulator of angiogenesis in endothelial cells via activation of OXSR1/OSR1 and STK39/SPAK: activation of OXSR1/OSR1 regulates chemotaxis and invasion, while STK39/SPAK regulates endothelial cell proliferation. Also acts independently of the WNK1-SPAK/OSR1 kinase cascade by catalyzing phosphorylation of other substrates, such as SYT2, PCF11 and NEDD4L. Mediates phosphorylation of SYT2, regulating SYT2 association with phospholipids and membrane-binding. Regulates mRNA export in the nucleus by mediating phosphorylation of PCF11, thereby decreasing the association between PCF11 and POLR2A/RNA polymerase II and promoting mRNA export to the cytoplasm. Acts as a negative regulator of autophagy. Required for the abscission step during mitosis, independently of the WNK1-SPAK/OSR1 kinase cascade. May also play a role in actin cytoskeletal reorganization. Also acts as a scaffold protein independently of its protein kinase activity: negatively regulates cell membrane localization of various transporters and channels, such as SLC4A4, SLC26A6, SLC26A9, TRPV4 and CFTR. Involved in the regulation of epithelial Na(+) channel (ENaC) by promoting activation of SGK1 in a kinase-independent manner: probably acts as a scaffold protein that promotes the recruitment of SGK1 to the mTORC2 complex in response to chloride, leading to mTORC2-dependent phosphorylation and activation of SGK1. Acts as an assembly factor for the ER membrane protein complex independently of its protein kinase activity: associates with EMC2 in the cytoplasm via its amphipathic alpha-helix, and prevents EMC2 ubiquitination and subsequent degradation, thereby promoting EMC2 stabilization. Its function is as follows. Kinase-defective isoform specifically expressed in kidney, which acts as a dominant-negative regulator of the longer isoform 1. Does not directly inhibit WNK4 and has no direct effect on sodium and chloride ion transport. Down-regulates sodium-chloride cotransporter activity indirectly by inhibiting isoform 1, it associates with isoform 1 and attenuates its kinase activity. In kidney, may play an important role regulating sodium and potassium balance. The protein is Serine/threonine-protein kinase WNK1 of Homo sapiens (Human).